We begin with the raw amino-acid sequence, 85 residues long: Large ribosomal subunit protein bL31B (85 aa).

It belongs to the bacterial ribosomal protein bL31 family. Type B subfamily. Part of the 50S ribosomal subunit.

This Bifidobacterium longum subsp. infantis (strain ATCC 15697 / DSM 20088 / JCM 1222 / NCTC 11817 / S12) protein is Large ribosomal subunit protein bL31B.